The chain runs to 248 residues: Pulmonary surfactant-associated protein A (248 aa).

The first 17 residues, 1 to 17 (MLLCSLTLMLLWMVASG), serve as a signal peptide directing secretion. The region spanning 28–100 (GSPGIPGTPG…PGERGPPGFP (73 aa)) is the Collagen-like domain. The interval 29–103 (SPGIPGTPGS…RGPPGFPAYL (75 aa)) is disordered. Over residues 42-51 (PGRDGRDGIK) the composition is skewed to basic and acidic residues. Residues 54-65 (PGPPGPMGPPGG) show a composition bias toward pro residues. The segment covering 69-82 (LPGRDGMTGAPGLP) has biased composition (low complexity). Positions 84–93 (ERGEKGEPGE) are enriched in basic and acidic residues. One can recognise a C-type lectin domain in the interval 127-247 (LQGSMLEVGE…CLQYRLAICE (121 aa)). 2 cysteine pairs are disulfide-bonded: Cys-155–Cys-246 and Cys-224–Cys-238. Residue Asn-207 is glycosylated (N-linked (GlcNAc...) asparagine). Ca(2+) contacts are provided by Glu-215, Arg-217, Asn-234, and Asp-235.

This sequence belongs to the SFTPA family. As to quaternary structure, oligomeric complex of 6 set of homotrimers.

The protein resides in the secreted. Its subcellular location is the extracellular space. The protein localises to the extracellular matrix. It localises to the surface film. Its function is as follows. In presence of calcium ions, it binds to surfactant phospholipids and contributes to lower the surface tension at the air-liquid interface in the alveoli of the mammalian lung and is essential for normal respiration. Enhances the expression of MYO18A/SP-R210 on alveolar macrophages. The chain is Pulmonary surfactant-associated protein A (SFTPA1) from Ovis aries (Sheep).